A 366-amino-acid chain; its full sequence is Arfaptin-1 (366 aa).

Residues 1-78 are disordered; the sequence is MAEESPKNSA…SSAPPLPCVL (78 aa). An N-acetylalanine modification is found at A2. S5 is subject to Phosphoserine. Residues 22–35 show a composition bias toward basic and acidic residues; the sequence is GDAHEHGYNRDLKH. A phosphoserine mark is found at S36 and S39. Polar residues predominate over residues 44–53; that stretch reads SETQITSHGF. A phosphoserine mark is found at S69, S79, and S125. The 201-residue stretch at 146–346 folds into the AH domain; it reads TVDLELEAQI…NQKQLEQTLK (201 aa). The residue at position 354 (T354) is a Phosphothreonine.

In terms of assembly, forms homodimers or heterodimers with ARFIP2. Interacts with non-myristoylated GTP-bound ARF3, but not to GDP-bound ARF3. Interacts with ARF1. Binds with lower affinity to ARF5 and with very little affinity to ARF6. Interacts with ARL1. Interacts with ATG9A.

It is found in the golgi apparatus. Its subcellular location is the trans-Golgi network membrane. Functionally, plays a role in controlling biogenesis of secretory granules at the trans-Golgi network. Mechanistically, binds ARF-GTP at the neck of a growing secretory granule precursor and forms a protective scaffold. Once the granule precursor has been completely loaded, active PRKD1 phosphorylates ARFIP1 and releases it from ARFs. In turn, ARFs induce fission. Through this mechanism, ensures proper secretory granule formation at the Golgi of pancreatic beta cells. The polypeptide is Arfaptin-1 (Rattus norvegicus (Rat)).